The primary structure comprises 129 residues: Lysozyme C (129 aa).

One can recognise a C-type lysozyme domain in the interval 1-129 (KVYGRCELAA…VNAWTRGCRL (129 aa)). Intrachain disulfides connect cysteine 6–cysteine 127, cysteine 30–cysteine 115, cysteine 64–cysteine 80, and cysteine 76–cysteine 94. Catalysis depends on residues glutamate 35 and aspartate 52.

It belongs to the glycosyl hydrolase 22 family. In terms of assembly, monomer.

The protein resides in the secreted. The enzyme catalyses Hydrolysis of (1-&gt;4)-beta-linkages between N-acetylmuramic acid and N-acetyl-D-glucosamine residues in a peptidoglycan and between N-acetyl-D-glucosamine residues in chitodextrins.. In terms of biological role, lysozymes have primarily a bacteriolytic function; those in tissues and body fluids are associated with the monocyte-macrophage system and enhance the activity of immunoagents. This Syrmaticus soemmerringii (Copper pheasant) protein is Lysozyme C (LYZ).